A 475-amino-acid polypeptide reads, in one-letter code: Ribulose bisphosphate carboxylase large chain (475 aa).

The propeptide occupies 1–2 (MS). An N-acetylproline modification is found at Pro3. At Lys14 the chain carries N6,N6,N6-trimethyllysine. Positions 123 and 173 each coordinate substrate. Lys175 serves as the catalytic Proton acceptor. Residue Lys177 participates in substrate binding. Mg(2+) is bound by residues Lys201, Asp203, and Glu204. Lys201 bears the N6-carboxylysine mark. His294 (proton acceptor) is an active-site residue. The substrate site is built by Arg295, His327, and Ser379.

It belongs to the RuBisCO large chain family. Type I subfamily. In terms of assembly, heterohexadecamer of 8 large chains and 8 small chains; disulfide-linked. The disulfide link is formed within the large subunit homodimers. Mg(2+) serves as cofactor. The disulfide bond which can form in the large chain dimeric partners within the hexadecamer appears to be associated with oxidative stress and protein turnover.

The protein resides in the plastid. Its subcellular location is the chloroplast. The enzyme catalyses 2 (2R)-3-phosphoglycerate + 2 H(+) = D-ribulose 1,5-bisphosphate + CO2 + H2O. It catalyses the reaction D-ribulose 1,5-bisphosphate + O2 = 2-phosphoglycolate + (2R)-3-phosphoglycerate + 2 H(+). Its function is as follows. RuBisCO catalyzes two reactions: the carboxylation of D-ribulose 1,5-bisphosphate, the primary event in carbon dioxide fixation, as well as the oxidative fragmentation of the pentose substrate in the photorespiration process. Both reactions occur simultaneously and in competition at the same active site. The sequence is that of Ribulose bisphosphate carboxylase large chain from Pseudolarix amabilis (Golden larch).